We begin with the raw amino-acid sequence, 478 residues long: Ketoisovalerate oxidoreductase subunit VorA (478 aa).

In terms of assembly, heterotrimer of the VorA, VorB and VorC subunits.

This chain is Ketoisovalerate oxidoreductase subunit VorA (vorA), found in Methanothermobacter marburgensis (strain ATCC BAA-927 / DSM 2133 / JCM 14651 / NBRC 100331 / OCM 82 / Marburg) (Methanobacterium thermoautotrophicum).